A 60-amino-acid polypeptide reads, in one-letter code: Large ribosomal subunit protein bL32 (60 aa).

Positions 1–23 (MAKHPVPKKKTSKSKRDMRRSHH) are enriched in basic residues. The segment at 1–34 (MAKHPVPKKKTSKSKRDMRRSHHALTAPNLTECP) is disordered. Positions 33, 36, 46, and 49 each coordinate Zn(2+). The C4-type zinc-finger motif lies at 33–49 (CPQCHGKKLSHHICPNC).

Belongs to the bacterial ribosomal protein bL32 family. In terms of assembly, part of the 50S ribosomal subunit. Contacts proteins L17 and L22. It depends on Zn(2+) as a cofactor.

Its function is as follows. Forms a cluster with L17 and L22, and with L22, a pair of 'tweezers' that hold together all the domains of the 23S rRNA. Interacts with the antibiotic troleandomycin which blocks the peptide exit tunnel. This chain is Large ribosomal subunit protein bL32 (rpmF), found in Deinococcus radiodurans (strain ATCC 13939 / DSM 20539 / JCM 16871 / CCUG 27074 / LMG 4051 / NBRC 15346 / NCIMB 9279 / VKM B-1422 / R1).